The primary structure comprises 153 residues: Endoribonuclease YbeY (153 aa).

Histidine 112, histidine 116, and histidine 122 together coordinate Zn(2+).

This sequence belongs to the endoribonuclease YbeY family. Requires Zn(2+) as cofactor.

The protein resides in the cytoplasm. Single strand-specific metallo-endoribonuclease involved in late-stage 70S ribosome quality control and in maturation of the 3' terminus of the 16S rRNA. The protein is Endoribonuclease YbeY of Persephonella marina (strain DSM 14350 / EX-H1).